The sequence spans 65 residues: Large ribosomal subunit protein uL29 (65 aa).

Belongs to the universal ribosomal protein uL29 family.

In Acidovorax ebreus (strain TPSY) (Diaphorobacter sp. (strain TPSY)), this protein is Large ribosomal subunit protein uL29.